The following is a 6061-amino-acid chain: Intermembrane lipid transfer protein vps13B (6061 aa).

The 114-residue stretch at 2–115 (FESLVADIIA…QLELKRKKLE (114 aa)) folds into the Chorein N-terminal domain. Disordered stretches follow at residues 590–623 (PKYK…NNNK), 803–828 (DIKN…NNKN), 1386–1414 (QQQQ…NVSS), 1604–1644 (SSNN…GTLS), 2747–2784 (QTNQ…EDQE), 2950–2972 (GLNN…NSST), 3364–3401 (LNRN…DDDD), 3855–3876 (QQQQ…RNKK), 4011–4068 (QQQQ…FKNN), 4107–4132 (ELEK…RPDE), 4262–4297 (NSSN…YNGR), 4321–4442 (SQSI…TSPG), 4601–4631 (TSSP…KKSL), 4753–4797 (NNNN…TQEF), 4861–4882 (NAGG…SISQ), 5003–5030 (LATK…DGIE), and 5372–5429 (NINN…IGQD). Residues 595–614 (HQENKENKENQENQENENKN) show a composition bias toward basic and acidic residues. Over residues 1395–1406 (QQQKEEEQHGGE) the composition is skewed to basic and acidic residues. Over residues 2747–2756 (QTNQNNQKNR) the composition is skewed to polar residues. Residues 2774–2784 (NDNDEYDEDQE) are compositionally biased toward acidic residues. The span at 3388-3401 (IDDDDGDGDDDDDD) shows a compositional bias: acidic residues. The segment covering 4015-4024 (QEKEKEIEKE) has biased composition (basic and acidic residues). A compositionally biased stretch (low complexity) spans 4031–4040 (LKNNNNISIN). Residues 4041-4057 (DNDDDDDDDDNDNDENN) show a composition bias toward acidic residues. A compositionally biased stretch (low complexity) spans 4058 to 4068 (NENYEFNFKNN). Over residues 4107–4120 (ELEKKKRERKENSK) the composition is skewed to basic and acidic residues. Composition is skewed to low complexity over residues 4330-4383 (TTTT…VGSN) and 4399-4429 (NNNN…NNNN). Polar residues predominate over residues 4430 to 4441 (SNDNQVNFSTSP). Low complexity-rich tracts occupy residues 4601-4617 (TSSP…NYNN) and 4753-4784 (NNNN…SNEN). Over residues 4785-4794 (SQDQPPSIKT) the composition is skewed to polar residues. 2 stretches are compositionally biased toward low complexity: residues 5013–5030 (DNSN…DGIE) and 5372–5384 (NINN…NNDN). Residues 5385 to 5409 (NKNKNNNDKNKNNDKNNKNNNDKNN) are compositionally biased toward basic and acidic residues. Residues 5410–5421 (NDNNNNNNNNNN) show a composition bias toward low complexity.

It belongs to the VPS13 family.

Its subcellular location is the membrane. Its function is as follows. Mediates the transfer of lipids between membranes at organelle contact sites. In Dictyostelium discoideum (Social amoeba), this protein is Intermembrane lipid transfer protein vps13B (vps13B).